A 128-amino-acid polypeptide reads, in one-letter code: Glycoprotein hormone alpha-2 (128 aa).

The first 20 residues, 1 to 20 (MPMAPRVLLLCLLGLAVTEG), serve as a signal peptide directing secretion. 4 cysteine pairs are disulfide-bonded: cysteine 30-cysteine 88, cysteine 47-cysteine 102, cysteine 56-cysteine 118, and cysteine 60-cysteine 120. Asparagine 36 and asparagine 80 each carry an N-linked (GlcNAc...) asparagine glycan.

The protein belongs to the glycoprotein hormones subunit alpha family. As to quaternary structure, heterodimer with GPHB5; this heterodimer interacts with thyroid-stimulating hormone receptor (TSHR), and hence stimulates cAMP production.

The protein localises to the secreted. In terms of biological role, functions as a heterodimeric glycoprotein hormone with GPHB5 able to bind and activate the thyroid-stimulating hormone receptor (TSHR), leading to increased cAMP production. Plays a central role in controlling thyroid cell metabolism. This is Glycoprotein hormone alpha-2 (Gpha2) from Mus musculus (Mouse).